Here is a 148-residue protein sequence, read N- to C-terminus: Large ribosomal subunit protein bL9 (148 aa).

The protein belongs to the bacterial ribosomal protein bL9 family.

Its function is as follows. Binds to the 23S rRNA. The protein is Large ribosomal subunit protein bL9 of Bacillus cereus (strain B4264).